A 418-amino-acid chain; its full sequence is L-rhamnose isomerase (418 aa).

Residues histidine 262, aspartate 294, and aspartate 296 each coordinate Mn(2+).

Belongs to the rhamnose isomerase family. In terms of assembly, homotetramer. Requires Mn(2+) as cofactor.

The protein resides in the cytoplasm. The enzyme catalyses L-rhamnopyranose = L-rhamnulose. Its pathway is carbohydrate degradation; L-rhamnose degradation; glycerone phosphate from L-rhamnose: step 1/3. Its function is as follows. Catalyzes the interconversion of L-rhamnose and L-rhamnulose. The polypeptide is L-rhamnose isomerase (Yersinia pestis bv. Antiqua (strain Antiqua)).